A 666-amino-acid polypeptide reads, in one-letter code: Amyloid beta A4 precursor protein-binding family B member 1-interacting protein (666 aa).

A Phosphoserine modification is found at serine 55. The interval 122–155 (SQYEDDLPPPPADPVLDLPLPPPPPEPLSQEEEE) is disordered. Residues 129-148 (PPPPADPVLDLPLPPPPPEP) are compositionally biased toward pro residues. Residues 176 to 263 (KKLVVKVHMN…KILFLEKEEK (88 aa)) form the Ras-associating domain. In terms of domain architecture, PH spans 310-419 (VPELEGALYL…WVMGIRIAKY (110 aa)). Residues 448 to 666 (AAAPAQPSTG…ALQKKRGNVS (219 aa)) are disordered. Residues 453–478 (QPSTGPKTGTTQPNGQIPQATHSVSA) are compositionally biased toward polar residues. A compositionally biased stretch (basic and acidic residues) spans 483–504 (AQRHAETSKDKKPALGNHHDPA). A Phosphoserine modification is found at serine 526. A Phosphothreonine modification is found at threonine 528. Serine 531 bears the Phosphoserine mark. 2 stretches are compositionally biased toward pro residues: residues 547–589 (PAPP…PPPS) and 598–631 (LPPP…PVPP).

The protein belongs to the MRL family. Interacts, through the N-terminal Pro-rich region, with the WW domain of APBB1. Interacts with RAP1A, PFN1, TLN1, VASP, VCL and ENAH. Widely expressed with high expression in thymus, spleen, lymph node, bone marrow and peripheral leukocytes.

It localises to the cell membrane. The protein resides in the cell projection. Its subcellular location is the lamellipodium. The protein localises to the cell junction. It is found in the focal adhesion. It localises to the cytoplasm. The protein resides in the cytoskeleton. Appears to function in the signal transduction from Ras activation to actin cytoskeletal remodeling. Suppresses insulin-induced promoter activities through AP1 and SRE. Mediates Rap1-induced adhesion. In Homo sapiens (Human), this protein is Amyloid beta A4 precursor protein-binding family B member 1-interacting protein (APBB1IP).